A 166-amino-acid polypeptide reads, in one-letter code: Myeloid-derived growth factor (166 aa).

The signal sequence occupies residues 1 to 24 (MAAPSGGFWTAVVLAAAALKLAAA).

The protein belongs to the MYDGF family. As to expression, expressed in prostate, spleen and lung, and weakly expressed in the left ventricle (LF) and liver. Expressed predominantly in inflammatory cells, such as monocytes and macrophages, and weakly expressed in neutrophils, T-cells, B-cells, endothelial cells and cardiac myocytes, after myocardial infarction (MI) (at protein level).

Its subcellular location is the secreted. It is found in the endoplasmic reticulum-Golgi intermediate compartment. The protein resides in the endoplasmic reticulum. It localises to the golgi apparatus. Its function is as follows. Bone marrow-derived monocyte and paracrine-acting protein that promotes cardiac myocyte survival and adaptive angiogenesis for cardiac protection and/or repair after myocardial infarction (MI). Stimulates endothelial cell proliferation through a MAPK1/3-, STAT3- and CCND1-mediated signaling pathway. Inhibits cardiac myocyte apoptosis in a PI3K/AKT-dependent signaling pathway. In Mus musculus (Mouse), this protein is Myeloid-derived growth factor.